Reading from the N-terminus, the 37-residue chain is Cellular retinoic acid-binding protein 2 (37 aa).

Residues 21 to 31 carry the Nuclear localization signal motif; the sequence is KALGVNMMLRK.

The protein belongs to the calycin superfamily. Fatty-acid binding protein (FABP) family. Embryo.

The protein resides in the cytoplasm. It is found in the endoplasmic reticulum. The protein localises to the nucleus. Functionally, transports retinoic acid to the nucleus. Regulates the access of retinoic acid to the nuclear retinoic acid receptors. The polypeptide is Cellular retinoic acid-binding protein 2 (CRABP2) (Gallus gallus (Chicken)).